A 430-amino-acid chain; its full sequence is Tol-Pal system protein TolB (430 aa).

Residues 1 to 21 (MKQAFRVALSVLMLFVAVAHA) form the signal peptide.

It belongs to the TolB family. In terms of assembly, the Tol-Pal system is composed of five core proteins: the inner membrane proteins TolA, TolQ and TolR, the periplasmic protein TolB and the outer membrane protein Pal. They form a network linking the inner and outer membranes and the peptidoglycan layer.

The protein localises to the periplasm. Part of the Tol-Pal system, which plays a role in outer membrane invagination during cell division and is important for maintaining outer membrane integrity. TolB occupies a key intermediary position in the Tol-Pal system because it communicates directly with both membrane-embedded components, Pal in the outer membrane and TolA in the inner membrane. The polypeptide is Tol-Pal system protein TolB (Erwinia tasmaniensis (strain DSM 17950 / CFBP 7177 / CIP 109463 / NCPPB 4357 / Et1/99)).